An 88-amino-acid polypeptide reads, in one-letter code: UPF0250 protein PM1928 (88 aa).

It belongs to the UPF0250 family.

The chain is UPF0250 protein PM1928 from Pasteurella multocida (strain Pm70).